The primary structure comprises 217 residues: Ran-binding protein 1 homolog b (217 aa).

Disordered stretches follow at residues 1-32 (MASI…QVAP) and 160-217 (ESEE…VPSA). The residue at position 2 (alanine 2) is an N-acetylalanine. Positions 14–26 (DEEETGANEDEDT) are enriched in acidic residues. Positions 29 to 164 (QVAPIVRLEE…FKEVAESEEE (136 aa)) constitute a RanBD1 domain. The span at 181–217 (LTVEEKESEKKPVEKAEENKKSEAVEEKKTEESVPSA) shows a compositional bias: basic and acidic residues.

As to quaternary structure, interacts with the GTP-bound form of RAN1, RAN2 and RAN3.

Its subcellular location is the nucleus. The protein resides in the nuclear pore complex. The chain is Ran-binding protein 1 homolog b (RANBP1B) from Arabidopsis thaliana (Mouse-ear cress).